A 287-amino-acid polypeptide reads, in one-letter code: Glutamate racemase (287 aa).

Polar residues predominate over residues 1 to 15; that stretch reads MATKPQDANTTSREA. The segment at 1–25 is disordered; sequence MATKPQDANTTSREAITSKADSPPR. Substrate contacts are provided by residues 32–33 and 64–65; these read DS and YG. Residue cysteine 96 is the Proton donor/acceptor of the active site. Residue 97-98 participates in substrate binding; it reads NT. Residue cysteine 208 is the Proton donor/acceptor of the active site. Position 209-210 (209-210) interacts with substrate; it reads TH.

Belongs to the aspartate/glutamate racemases family.

The catalysed reaction is L-glutamate = D-glutamate. It participates in cell wall biogenesis; peptidoglycan biosynthesis. Functionally, provides the (R)-glutamate required for cell wall biosynthesis. The sequence is that of Glutamate racemase from Yersinia pseudotuberculosis serotype O:3 (strain YPIII).